Here is a 154-residue protein sequence, read N- to C-terminus: MPFLLNNFKFSRFRSFATKLEKTKGFFNYQPLTKFKQKYSLDVAYVYIISSYNNTLISLTDFLGNVLKNESCGSCNYKGRFKRKFIASKQAAENIVSFCKFQRIKRLVIILHGYGKGSEMVIRTIREKELKILDIKIKDKKPYNGCRQKKKRRI.

The protein belongs to the universal ribosomal protein uS11 family. In terms of assembly, part of the 30S ribosomal subunit.

The protein localises to the plastid. The protein is Small ribosomal subunit protein uS11c of Helicosporidium sp. subsp. Simulium jonesii (Green alga).